We begin with the raw amino-acid sequence, 296 residues long: Light-inducible protein CPRF3 (296 aa).

3 disordered regions span residues 1-27 (MSDG…ITTT), 98-165 (PNLA…GSLE), and 190-223 (RVND…KSDE). The segment covering 107–117 (VGRKISDEKGR) has biased composition (basic and acidic residues). The span at 145–156 (SSSDNDCPSLSS) shows a compositional bias: low complexity. The 64-residue stretch at 196–259 (ELKRQRRKQS…AEVTSENHSI (64 aa)) folds into the bZIP domain. The tract at residues 198 to 220 (KRQRRKQSNRESARRSRLRKQAK) is basic motif. Residues 224–245 (LQERLDNLSKENRILRKNLQRI) form a leucine-zipper region.

This sequence belongs to the bZIP family. Binds DNA as a dimer.

It localises to the nucleus. Binds to the G-box-like motif (5'-ACGTGGC-3') of the chalcone synthase (CHS) gene promoter. G-box and G-box-like motifs are defined in promoters of certain plant genes which are regulated by such diverse stimuli as light-induction or hormone control. The sequence is that of Light-inducible protein CPRF3 (CPRF3) from Petroselinum crispum (Parsley).